A 343-amino-acid polypeptide reads, in one-letter code: MIKLSNITKVFHQGTRTIQALNNVSLHVPAGQIYGVIGASGAGKSTLIRCVNLLERPTEGSVLVDGQELTTLSESELTKARRQIGMIFQHFNLLSSRTVFGNVALPLELDNTPKDEIKRRVTELLSLVGLGDKHDSYPSNLSGGQKQRVAIARALASNPKVLLCDEATSALDPATTRSILELLKDINRRLGLTILLITHEMDVVKRICDCVAVISNGELIEQDTVSEVFSHPKTPLAQKFIQSTLHLDIPEDYQERLQAEPFTDCVPMLRLEFTGQSVDAPLLSETARRFNVNNNIISAQMDYAGGVKFGIMLTEMHGTQQDTQAAIAWLQEHHVKVEVLGYV.

An ABC transporter domain is found at 2–241; the sequence is IKLSNITKVF…PKTPLAQKFI (240 aa). 38 to 45 contributes to the ATP binding site; it reads GASGAGKS.

The protein belongs to the ABC transporter superfamily. Methionine importer (TC 3.A.1.24) family. As to quaternary structure, the complex is composed of two ATP-binding proteins (MetN), two transmembrane proteins (MetI) and a solute-binding protein (MetQ).

The protein resides in the cell inner membrane. It carries out the reaction L-methionine(out) + ATP + H2O = L-methionine(in) + ADP + phosphate + H(+). It catalyses the reaction D-methionine(out) + ATP + H2O = D-methionine(in) + ADP + phosphate + H(+). Its function is as follows. Part of the ABC transporter complex MetNIQ involved in methionine import. Responsible for energy coupling to the transport system. The sequence is that of Methionine import ATP-binding protein MetN from Escherichia coli O157:H7.